A 706-amino-acid polypeptide reads, in one-letter code: Amino-acid acetyltransferase, mitochondrial (706 aa).

Disordered stretches follow at residues 1–25 (MSSR…GAGD) and 367–403 (NPAN…PAKQ). The N-terminal 35 residues, 1 to 35 (MSSRVLASRAAQPLKRHPTVVGAGDEAYPTPRRCF), are a transit peptide targeting the mitochondrion. Polar residues predominate over residues 367–388 (NPANNSQGESVVTNPISDSNAV). The span at 389–401 (SESASTEPTSTPA) shows a compositional bias: low complexity. Positions 527 to 696 (TRPNMNLDDP…YEAVCRSIQP (170 aa)) constitute an N-acetyltransferase domain.

The protein belongs to the acetyltransferase family.

Its subcellular location is the mitochondrion. The catalysed reaction is L-glutamate + acetyl-CoA = N-acetyl-L-glutamate + CoA + H(+). The protein operates within amino-acid biosynthesis; L-arginine biosynthesis; N(2)-acetyl-L-ornithine from L-glutamate: step 1/4. Its function is as follows. N-acetylglutamate synthase involved in arginine biosynthesis. This chain is Amino-acid acetyltransferase, mitochondrial (arg2), found in Emericella nidulans (strain FGSC A4 / ATCC 38163 / CBS 112.46 / NRRL 194 / M139) (Aspergillus nidulans).